A 499-amino-acid polypeptide reads, in one-letter code: Thioredoxin reductase 1, cytoplasmic (499 aa).

Residues 22–23 (SG), 42–43 (DF), 58–59 (TC), and 63–67 (GCIPK) contribute to the FAD site. Cys59 and Cys64 are disulfide-bonded. Lys68 bears the N6-succinyllysine mark. A Phosphotyrosine modification is found at Tyr131. FAD contacts are provided by residues 131-132 (YG) and Thr161. NADP(+)-binding positions include Arg166, 198–204 (ASYVALE), 221–222 (RS), Arg226, 226–228 (RGF), 292–293 (GR), and Lys315. Residue Tyr200 coordinates FAD. FAD is bound by residues Asp334, 341–343 (ELT), and His472. Glu341 lines the NADP(+) pocket. His472 acts as the Proton acceptor in catalysis. A cross-link (cysteinyl-selenocysteine (Cys-Sec)) is located at residues 497 to 498 (CU). Residue Sec498 is a non-standard amino acid, selenocysteine.

It belongs to the class-I pyridine nucleotide-disulfide oxidoreductase family. In terms of assembly, homodimer. FAD is required as a cofactor. ISGylated.

It is found in the cytoplasm. It carries out the reaction [thioredoxin]-dithiol + NADP(+) = [thioredoxin]-disulfide + NADPH + H(+). The catalysed reaction is H2O2 + NADPH + H(+) = NADP(+) + 2 H2O. Functionally, reduces disulfideprotein thioredoxin (Trx) to its dithiol-containing form. Homodimeric flavoprotein involved in the regulation of cellular redox reactions, growth and differentiation. Contains a selenocysteine residue at the C-terminal active site that is essential for catalysis. Also has reductase activity on hydrogen peroxide (H2O2). This Bos taurus (Bovine) protein is Thioredoxin reductase 1, cytoplasmic (TXNRD1).